The primary structure comprises 176 residues: ATP-dependent protease subunit HslV (176 aa).

The active site involves Thr-2. 3 residues coordinate Na(+): Gly-157, Cys-160, and Thr-163.

The protein belongs to the peptidase T1B family. HslV subfamily. As to quaternary structure, a double ring-shaped homohexamer of HslV is capped on each side by a ring-shaped HslU homohexamer. The assembly of the HslU/HslV complex is dependent on binding of ATP.

It localises to the cytoplasm. It carries out the reaction ATP-dependent cleavage of peptide bonds with broad specificity.. Its activity is regulated as follows. Allosterically activated by HslU binding. Protease subunit of a proteasome-like degradation complex believed to be a general protein degrading machinery. This chain is ATP-dependent protease subunit HslV, found in Enterobacter sp. (strain 638).